Here is a 332-residue protein sequence, read N- to C-terminus: Divalent cation transporter CmaX (332 aa).

Over 1–277 the chain is Cytoplasmic; the sequence is MQAYESGDER…MNRTMYLLGI (277 aa). The chain crosses the membrane as a helical span at residues 278–286; sequence ITGFFLPMS. The Periplasmic portion of the chain corresponds to 287-307; it reads FVTGLLGINVGGIPGADAPHG. The helical transmembrane segment at 308–323 threads the bilayer; sequence FWLACLLIGGVATFQW. Topologically, residues 324–332 are cytoplasmic; the sequence is WVFRRLRWL.

Belongs to the CorA metal ion transporter (MIT) (TC 1.A.35) family. Homopentamer.

The protein localises to the cell inner membrane. The enzyme catalyses Zn(2+)(in) = Zn(2+)(out). The catalysed reaction is Cd(2+)(in) = Cd(2+)(out). It catalyses the reaction Ni(2+)(in) = Ni(2+)(out). It carries out the reaction Co(2+)(in) = Co(2+)(out). Functionally, transports divalent cations including Zn(2+), Cd(2+), Ni(2+) and Co(2+). The proton gradient has a small influence on transport suggesting that the transport is probably not proton-dependent. The sequence is that of Divalent cation transporter CmaX from Pseudomonas aeruginosa (strain ATCC 15692 / DSM 22644 / CIP 104116 / JCM 14847 / LMG 12228 / 1C / PRS 101 / PAO1).